Here is a 384-residue protein sequence, read N- to C-terminus: Alanine racemase (384 aa).

Lys-39 (proton acceptor; specific for D-alanine) is an active-site residue. Position 39 is an N6-(pyridoxal phosphate)lysine (Lys-39). Position 136 (Arg-136) interacts with substrate. Tyr-265 functions as the Proton acceptor; specific for L-alanine in the catalytic mechanism. Substrate is bound at residue Met-312.

This sequence belongs to the alanine racemase family. The cofactor is pyridoxal 5'-phosphate.

It carries out the reaction L-alanine = D-alanine. The protein operates within amino-acid biosynthesis; D-alanine biosynthesis; D-alanine from L-alanine: step 1/1. Functionally, catalyzes the interconversion of L-alanine and D-alanine. May also act on other amino acids. The protein is Alanine racemase (alr) of Geobacillus kaustophilus (strain HTA426).